Reading from the N-terminus, the 220-residue chain is Ribosomal RNA large subunit methyltransferase E (220 aa).

S-adenosyl-L-methionine is bound by residues Gly-60, Trp-62, Asp-92, Asp-108, and Asp-133. The Proton acceptor role is filled by Lys-173.

This sequence belongs to the class I-like SAM-binding methyltransferase superfamily. RNA methyltransferase RlmE family.

It is found in the cytoplasm. The enzyme catalyses uridine(2552) in 23S rRNA + S-adenosyl-L-methionine = 2'-O-methyluridine(2552) in 23S rRNA + S-adenosyl-L-homocysteine + H(+). Its function is as follows. Specifically methylates the uridine in position 2552 of 23S rRNA at the 2'-O position of the ribose in the fully assembled 50S ribosomal subunit. The sequence is that of Ribosomal RNA large subunit methyltransferase E from Paraburkholderia phymatum (strain DSM 17167 / CIP 108236 / LMG 21445 / STM815) (Burkholderia phymatum).